Consider the following 460-residue polypeptide: Signal recognition particle 54 kDa protein (460 aa).

GTP contacts are provided by residues 104-111, 184-188, and 242-245; these read GLQGSGKT, DTAGR, and TKLD.

This sequence belongs to the GTP-binding SRP family. SRP54 subfamily. In terms of assembly, part of the signal recognition particle protein translocation system, which is composed of SRP and FtsY. Archaeal SRP consists of a 7S RNA molecule of 300 nucleotides and two protein subunits: SRP54 and SRP19.

The protein localises to the cytoplasm. The enzyme catalyses GTP + H2O = GDP + phosphate + H(+). Functionally, involved in targeting and insertion of nascent membrane proteins into the cytoplasmic membrane. Binds to the hydrophobic signal sequence of the ribosome-nascent chain (RNC) as it emerges from the ribosomes. The SRP-RNC complex is then targeted to the cytoplasmic membrane where it interacts with the SRP receptor FtsY. The chain is Signal recognition particle 54 kDa protein from Halobacterium salinarum (strain ATCC 29341 / DSM 671 / R1).